Here is a 622-residue protein sequence, read N- to C-terminus: Low affinity potassium transport system protein Kup (622 aa).

12 helical membrane-spanning segments follow: residues 9–29 (LSAVTLAAIGVVYGDIGTSPL), 46–66 (PDVVFGFLSLIFWMLILVVSV), 101–121 (ILVVLGLIGGSFFYGEVVITP), 137–157 (PALDPYIVPCSIAVLTLLFVI), 165–185 (VGKLFAPVMLVWFLTLALLGL), 213–233 (VSFFALGAVVLAITGVEALYA), 247–267 (WFTVVLPSLVLNYFGQGALLL), 276–296 (PFFLLAPDWALIPLLILATLA), 337–357 (IYIPVINWTLYLAVVLVIIGF), 363–383 (LAAAYGIAVTGTMVITSILFC), 395–415 (FLVAFLLMVLLIIDIPMFSAN), and 416–436 (VLKLFSGGWLPLSLGLVMFII).

Belongs to the HAK/KUP transporter (TC 2.A.72) family.

Its subcellular location is the cell inner membrane. It catalyses the reaction K(+)(in) + H(+)(in) = K(+)(out) + H(+)(out). Functionally, responsible for the low-affinity transport of potassium into the cell. Likely operates as a K(+):H(+) symporter. This is Low affinity potassium transport system protein Kup from Yersinia pseudotuberculosis serotype O:1b (strain IP 31758).